The chain runs to 272 residues: Sulfate transporter CysZ (272 aa).

The next 4 helical transmembrane spans lie at 29–49 (FVIM…WLFI), 66–86 (WLSF…LLLF), 148–168 (IIAL…VPVL), and 219–239 (FVPV…TLMW).

This sequence belongs to the CysZ family.

The protein resides in the cell inner membrane. Functionally, high affinity, high specificity proton-dependent sulfate transporter, which mediates sulfate uptake. Provides the sulfur source for the cysteine synthesis pathway. The sequence is that of Sulfate transporter CysZ from Haemophilus influenzae (strain PittGG).